The sequence spans 174 residues: UPF0316 protein LMOf2365_1801 (174 aa).

3 consecutive transmembrane segments (helical) span residues 4–24 (GIFI…IYTV), 36–56 (LAAL…SLVL), and 62–82 (IANV…GMKI).

Belongs to the UPF0316 family.

Its subcellular location is the cell membrane. This Listeria monocytogenes serotype 4b (strain F2365) protein is UPF0316 protein LMOf2365_1801.